The chain runs to 628 residues: Probable potassium transport system protein Kup 1 (628 aa).

Transmembrane regions (helical) follow at residues 18 to 38 (ITLA…LYAL), 58 to 78 (IVSL…VLLV), 106 to 126 (ALLM…AVIT), 141 to 161 (ITPE…VILF), 175 to 195 (FGPI…YEIV), 219 to 239 (IAFI…ALYA), 253 to 273 (WGSL…ALLL), 285 to 305 (LLAP…ATVI), 343 to 363 (IYLP…IIWF), 371 to 391 (AAYG…LMVV), 401 to 421 (WLIA…FAAN), and 425 to 445 (FLAG…VMTT).

Belongs to the HAK/KUP transporter (TC 2.A.72) family.

It is found in the cell inner membrane. It catalyses the reaction K(+)(in) + H(+)(in) = K(+)(out) + H(+)(out). In terms of biological role, transport of potassium into the cell. Likely operates as a K(+):H(+) symporter. This Aeromonas hydrophila subsp. hydrophila (strain ATCC 7966 / DSM 30187 / BCRC 13018 / CCUG 14551 / JCM 1027 / KCTC 2358 / NCIMB 9240 / NCTC 8049) protein is Probable potassium transport system protein Kup 1.